The following is a 203-amino-acid chain: Glycerol-3-phosphate acyltransferase (203 aa).

Helical transmembrane passes span 6–26, 82–102, 118–138, and 141–161; these read LTLL…AVLV, AISL…PIFF, APIG…LVLI, and YSSL…WWLD.

The protein belongs to the PlsY family. In terms of assembly, probably interacts with PlsX.

The protein localises to the cell inner membrane. The enzyme catalyses an acyl phosphate + sn-glycerol 3-phosphate = a 1-acyl-sn-glycero-3-phosphate + phosphate. Its pathway is lipid metabolism; phospholipid metabolism. Its function is as follows. Catalyzes the transfer of an acyl group from acyl-phosphate (acyl-PO(4)) to glycerol-3-phosphate (G3P) to form lysophosphatidic acid (LPA). This enzyme utilizes acyl-phosphate as fatty acyl donor, but not acyl-CoA or acyl-ACP. The polypeptide is Glycerol-3-phosphate acyltransferase (Shewanella sp. (strain MR-7)).